Reading from the N-terminus, the 124-residue chain is Small ribosomal subunit protein uS12 (124 aa).

The tract at residues Met-1–Gly-32 is disordered. Residue Asp-89 is modified to 3-methylthioaspartic acid. The interval Thr-104–Ser-124 is disordered. Residues Lys-108–Gly-118 show a composition bias toward basic residues.

It belongs to the universal ribosomal protein uS12 family. As to quaternary structure, part of the 30S ribosomal subunit. Contacts proteins S8 and S17. May interact with IF1 in the 30S initiation complex.

In terms of biological role, with S4 and S5 plays an important role in translational accuracy. Its function is as follows. Interacts with and stabilizes bases of the 16S rRNA that are involved in tRNA selection in the A site and with the mRNA backbone. Located at the interface of the 30S and 50S subunits, it traverses the body of the 30S subunit contacting proteins on the other side and probably holding the rRNA structure together. The combined cluster of proteins S8, S12 and S17 appears to hold together the shoulder and platform of the 30S subunit. This Rhodococcus jostii (strain RHA1) protein is Small ribosomal subunit protein uS12.